The following is a 421-amino-acid chain: Serine--tRNA ligase (421 aa).

230–232 (TAE) is an L-serine binding site. Position 261 to 263 (261 to 263 (RRE)) interacts with ATP. Glu-284 contacts L-serine. 348-351 (EISS) contributes to the ATP binding site. L-serine is bound at residue Ser-383.

This sequence belongs to the class-II aminoacyl-tRNA synthetase family. Type-1 seryl-tRNA synthetase subfamily. Homodimer. The tRNA molecule binds across the dimer.

The protein localises to the cytoplasm. The enzyme catalyses tRNA(Ser) + L-serine + ATP = L-seryl-tRNA(Ser) + AMP + diphosphate + H(+). The catalysed reaction is tRNA(Sec) + L-serine + ATP = L-seryl-tRNA(Sec) + AMP + diphosphate + H(+). It participates in aminoacyl-tRNA biosynthesis; selenocysteinyl-tRNA(Sec) biosynthesis; L-seryl-tRNA(Sec) from L-serine and tRNA(Sec): step 1/1. Functionally, catalyzes the attachment of serine to tRNA(Ser). Is also able to aminoacylate tRNA(Sec) with serine, to form the misacylated tRNA L-seryl-tRNA(Sec), which will be further converted into selenocysteinyl-tRNA(Sec). This is Serine--tRNA ligase from Finegoldia magna (strain ATCC 29328 / DSM 20472 / WAL 2508) (Peptostreptococcus magnus).